The sequence spans 388 residues: Phosphopentomutase (388 aa).

Positions 10, 282, 287, 323, 324, and 335 each coordinate Mn(2+).

Belongs to the phosphopentomutase family. Mn(2+) is required as a cofactor.

Its subcellular location is the cytoplasm. It catalyses the reaction 2-deoxy-alpha-D-ribose 1-phosphate = 2-deoxy-D-ribose 5-phosphate. It carries out the reaction alpha-D-ribose 1-phosphate = D-ribose 5-phosphate. Its pathway is carbohydrate degradation; 2-deoxy-D-ribose 1-phosphate degradation; D-glyceraldehyde 3-phosphate and acetaldehyde from 2-deoxy-alpha-D-ribose 1-phosphate: step 1/2. In terms of biological role, isomerase that catalyzes the conversion of deoxy-ribose 1-phosphate (dRib-1-P) and ribose 1-phosphate (Rib-1-P) to deoxy-ribose 5-phosphate (dRib-5-P) and ribose 5-phosphate (Rib-5-P), respectively. This is Phosphopentomutase from Acetivibrio thermocellus (strain ATCC 27405 / DSM 1237 / JCM 9322 / NBRC 103400 / NCIMB 10682 / NRRL B-4536 / VPI 7372) (Clostridium thermocellum).